Consider the following 364-residue polypeptide: Phosphoserine aminotransferase (364 aa).

Arg42 is a binding site for L-glutamate. Pyridoxal 5'-phosphate is bound by residues Gly76–Arg77, Trp102, Thr156, Asp175, and Gln198. An N6-(pyridoxal phosphate)lysine modification is found at Lys199. Asn240–Thr241 serves as a coordination point for pyridoxal 5'-phosphate.

Belongs to the class-V pyridoxal-phosphate-dependent aminotransferase family. SerC subfamily. As to quaternary structure, homodimer. Pyridoxal 5'-phosphate serves as cofactor.

It is found in the cytoplasm. The catalysed reaction is O-phospho-L-serine + 2-oxoglutarate = 3-phosphooxypyruvate + L-glutamate. The enzyme catalyses 4-(phosphooxy)-L-threonine + 2-oxoglutarate = (R)-3-hydroxy-2-oxo-4-phosphooxybutanoate + L-glutamate. It functions in the pathway amino-acid biosynthesis; L-serine biosynthesis; L-serine from 3-phospho-D-glycerate: step 2/3. It participates in cofactor biosynthesis; pyridoxine 5'-phosphate biosynthesis; pyridoxine 5'-phosphate from D-erythrose 4-phosphate: step 3/5. Its function is as follows. Catalyzes the reversible conversion of 3-phosphohydroxypyruvate to phosphoserine and of 3-hydroxy-2-oxo-4-phosphonooxybutanoate to phosphohydroxythreonine. The chain is Phosphoserine aminotransferase from Shewanella sediminis (strain HAW-EB3).